Reading from the N-terminus, the 292-residue chain is Short chain dehydrogenase mpl6 (292 aa).

NADP(+) contacts are provided by valine 37, aspartate 95, asparagine 122, arginine 156, tyrosine 188, lysine 192, valine 221, and threonine 223. Residue tyrosine 188 is the Proton donor of the active site. Lysine 192 functions as the Lowers pKa of active site Tyr in the catalytic mechanism.

The protein belongs to the short-chain dehydrogenases/reductases (SDR) family.

Its pathway is mycotoxin biosynthesis. Its function is as follows. Short chain dehydrogenase; part of the gene cluster that mediates the biosynthesis of the mycotoxin citrinin, a hepato-nephrotoxic compound to humans due to inhibition of respiration complex III. The pathway begins with the synthesis of a keto-aldehyde intermediate by the citrinin PKS (pksCT) from successive condensations of 4 malonyl-CoA units, presumably with a simple acetyl-CoA starter unit. Release of the keto-aldehyde intermediate is consistent with the presence of the C-terminal reductive release domain. Mp11 collaborates with pksCT by catalyzing the hydrolysis of ACP-bound acyl intermediates to free the ACP from stalled intermediates. Mpl2 then catalyzes the oxidation of the C-12 methyl of the ketone intermediate to an alcohol intermediate which is further oxidized by the oxidoreductase mpl7 to produce a bisaldehyde intermediate. The fourth catalytic step is catalyzed by the mpl4 aldehyde dehydrogenase. The final transformation is the reduction of C-3 by mpl6 to provide the chemically stable citrinin nucleus. This Monascus purpureus (Red mold) protein is Short chain dehydrogenase mpl6.